The primary structure comprises 133 residues: Small ribosomal subunit protein uS11 (133 aa).

Belongs to the universal ribosomal protein uS11 family. In terms of assembly, part of the 30S ribosomal subunit. Interacts with proteins S7 and S18. Binds to IF-3.

Its function is as follows. Located on the platform of the 30S subunit, it bridges several disparate RNA helices of the 16S rRNA. Forms part of the Shine-Dalgarno cleft in the 70S ribosome. This Christiangramia forsetii (strain DSM 17595 / CGMCC 1.15422 / KT0803) (Gramella forsetii) protein is Small ribosomal subunit protein uS11.